Consider the following 217-residue polypeptide: 3-isopropylmalate dehydratase small subunit (217 aa).

Belongs to the LeuD family. LeuD type 1 subfamily. Heterodimer of LeuC and LeuD.

The catalysed reaction is (2R,3S)-3-isopropylmalate = (2S)-2-isopropylmalate. The protein operates within amino-acid biosynthesis; L-leucine biosynthesis; L-leucine from 3-methyl-2-oxobutanoate: step 2/4. In terms of biological role, catalyzes the isomerization between 2-isopropylmalate and 3-isopropylmalate, via the formation of 2-isopropylmaleate. In Delftia acidovorans (strain DSM 14801 / SPH-1), this protein is 3-isopropylmalate dehydratase small subunit.